A 145-amino-acid chain; its full sequence is 3-dehydroquinate dehydratase (145 aa).

The active-site Proton acceptor is the Tyr-23. Positions 74, 80, and 87 each coordinate substrate. Catalysis depends on His-100, which acts as the Proton donor. Residues 101-102 (LS) and Arg-111 each bind substrate.

It belongs to the type-II 3-dehydroquinase family. As to quaternary structure, homododecamer.

It catalyses the reaction 3-dehydroquinate = 3-dehydroshikimate + H2O. Its pathway is metabolic intermediate biosynthesis; chorismate biosynthesis; chorismate from D-erythrose 4-phosphate and phosphoenolpyruvate: step 3/7. Functionally, catalyzes a trans-dehydration via an enolate intermediate. The polypeptide is 3-dehydroquinate dehydratase (Halalkalibacterium halodurans (strain ATCC BAA-125 / DSM 18197 / FERM 7344 / JCM 9153 / C-125) (Bacillus halodurans)).